The sequence spans 362 residues: UDP-arabinopyranose mutase 3 (362 aa).

Residues 106–108 carry the DXD motif motif; sequence DDD. N-linked (Glc...) arginine glycosylation is present at Arg-154.

This sequence belongs to the RGP family. As to quaternary structure, heterodimer with RGP1. Mn(2+) serves as cofactor. The cofactor is Mg(2+). Reversibly glycosylated in vitro by UDP-glucose, UDP-xylose and UDP-galactose, but not UDP-mannose. In terms of tissue distribution, specifically expressed in developing seeds.

It localises to the cytoplasm. It is found in the cytosol. Its subcellular location is the golgi apparatus. It catalyses the reaction UDP-beta-L-arabinofuranose = UDP-beta-L-arabinopyranose. In terms of biological role, UDP-L-arabinose mutase involved in the biosynthesis of cell wall non-cellulosic polysaccharides. Catalyzes the interconvertion of UDP-L-arabinopyranose (UDP-Arap) and UDP-L-arabinofuranose (UDP-Araf). Preferentially catalyzes the formation of UDP-Arap from UDP-Araf. At thermodynamic equilibrium in vitro the ratio of the pyranose form over the furanose form is 95:5. Is not active on other UDP-sugars (UDP-Gal, UDP-Xyl, UDP-Glc, GDP-Man and GDP-Fuc). Is probably active as heteromer in vivo. This chain is UDP-arabinopyranose mutase 3, found in Arabidopsis thaliana (Mouse-ear cress).